Reading from the N-terminus, the 474-residue chain is 3-isopropylmalate dehydratase large subunit (474 aa).

[4Fe-4S] cluster is bound by residues cysteine 355, cysteine 415, and cysteine 418.

This sequence belongs to the aconitase/IPM isomerase family. LeuC type 1 subfamily. Heterodimer of LeuC and LeuD. [4Fe-4S] cluster serves as cofactor.

The enzyme catalyses (2R,3S)-3-isopropylmalate = (2S)-2-isopropylmalate. It participates in amino-acid biosynthesis; L-leucine biosynthesis; L-leucine from 3-methyl-2-oxobutanoate: step 2/4. Catalyzes the isomerization between 2-isopropylmalate and 3-isopropylmalate, via the formation of 2-isopropylmaleate. In Shewanella oneidensis (strain ATCC 700550 / JCM 31522 / CIP 106686 / LMG 19005 / NCIMB 14063 / MR-1), this protein is 3-isopropylmalate dehydratase large subunit.